Reading from the N-terminus, the 705-residue chain is Elongation factor G (705 aa).

Residues 8-290 (ERYRNFGIMA…GVVHLLPSPA (283 aa)) form the tr-type G domain. GTP-binding positions include 17–24 (AHIDAGKT), 88–92 (DTPGH), and 142–145 (NKMD). The interval 290–309 (ADRPPVQGIDENEKEDTRDA) is disordered.

It belongs to the TRAFAC class translation factor GTPase superfamily. Classic translation factor GTPase family. EF-G/EF-2 subfamily.

It localises to the cytoplasm. Functionally, catalyzes the GTP-dependent ribosomal translocation step during translation elongation. During this step, the ribosome changes from the pre-translocational (PRE) to the post-translocational (POST) state as the newly formed A-site-bound peptidyl-tRNA and P-site-bound deacylated tRNA move to the P and E sites, respectively. Catalyzes the coordinated movement of the two tRNA molecules, the mRNA and conformational changes in the ribosome. The chain is Elongation factor G from Xanthomonas campestris pv. campestris (strain 8004).